The chain runs to 301 residues: Mitochondrial import receptor subunit TOM40 homolog (301 aa).

The tract at residues 1-20 is disordered; it reads MATPTESEFAAPIPQTNPGS.

This sequence belongs to the Tom40 family. As to quaternary structure, forms part of the preprotein translocase complex of the outer mitochondrial membrane (TOM complex). Interacts with mitochondrial targeting sequences.

It localises to the mitochondrion outer membrane. Functionally, channel-forming protein essential for import of protein precursors into mitochondria. Specifically required for nnt-1 accumulation in the mitochondria and may be involved in the secretion of daf-28/insulin from the mitochondria. Required for embryonic and larval development. The sequence is that of Mitochondrial import receptor subunit TOM40 homolog from Caenorhabditis briggsae.